Here is a 318-residue protein sequence, read N- to C-terminus: Cytochrome c biogenesis protein CcsA (318 aa).

8 helical membrane passes run 17-37 (VLAL…ISFW), 45-65 (SAVV…QLVL), 75-95 (ISNL…AQLL), 104-124 (IVSA…SFAL), 149-169 (VIMC…AVLF), 224-244 (TITV…VWAN), 258-275 (TWAL…HTRF), and 287-307 (VAVA…LLGI).

This sequence belongs to the CcmF/CycK/Ccl1/NrfE/CcsA family. May interact with ccs1.

The protein resides in the cellular thylakoid membrane. Its function is as follows. Required during biogenesis of c-type cytochromes (cytochrome c6 and cytochrome f) at the step of heme attachment. This Prochlorococcus marinus (strain MIT 9303) protein is Cytochrome c biogenesis protein CcsA.